The chain runs to 136 residues: Ribosome-binding factor A (136 aa).

The protein belongs to the RbfA family. As to quaternary structure, monomer. Binds 30S ribosomal subunits, but not 50S ribosomal subunits or 70S ribosomes.

The protein resides in the cytoplasm. Functionally, one of several proteins that assist in the late maturation steps of the functional core of the 30S ribosomal subunit. Associates with free 30S ribosomal subunits (but not with 30S subunits that are part of 70S ribosomes or polysomes). Required for efficient processing of 16S rRNA. May interact with the 5'-terminal helix region of 16S rRNA. The polypeptide is Ribosome-binding factor A (Rhizobium etli (strain ATCC 51251 / DSM 11541 / JCM 21823 / NBRC 15573 / CFN 42)).